Consider the following 355-residue polypeptide: Peptide chain release factor 1 (355 aa).

Residue Q233 is modified to N5-methylglutamine. The segment covering 283-293 has biased composition (basic and acidic residues); sequence EKNKDRADARK. Residues 283–304 form a disordered region; that stretch reads EKNKDRADARKSQVGTGDRSER.

It belongs to the prokaryotic/mitochondrial release factor family. Post-translationally, methylated by PrmC. Methylation increases the termination efficiency of RF1.

The protein localises to the cytoplasm. Peptide chain release factor 1 directs the termination of translation in response to the peptide chain termination codons UAG and UAA. This is Peptide chain release factor 1 from Finegoldia magna (strain ATCC 29328 / DSM 20472 / WAL 2508) (Peptostreptococcus magnus).